The chain runs to 124 residues: Fluoride-specific ion channel FluC (124 aa).

Helical transmembrane passes span 5–25 (ILAV…TGTW), 38–58 (TLAV…LFLL), 69–89 (GLIV…LDTL), and 99–119 (LALG…WAGL). Na(+) is bound by residues Gly-76 and Thr-79.

This sequence belongs to the fluoride channel Fluc/FEX (TC 1.A.43) family.

It is found in the cell inner membrane. It catalyses the reaction fluoride(in) = fluoride(out). Na(+) is not transported, but it plays an essential structural role and its presence is essential for fluoride channel function. Its function is as follows. Fluoride-specific ion channel. Important for reducing fluoride concentration in the cell, thus reducing its toxicity. This chain is Fluoride-specific ion channel FluC, found in Pseudomonas syringae pv. syringae (strain B728a).